We begin with the raw amino-acid sequence, 67 residues long: Guanine nucleotide-binding protein G(I)/G(S)/G(O) subunit gamma-13 (67 aa).

Cys-64 bears the Cysteine methyl ester mark. The S-farnesyl cysteine moiety is linked to residue Cys-64. Residues 65–67 (TIL) constitute a propeptide, removed in mature form.

The protein belongs to the G protein gamma family. As to quaternary structure, g proteins are composed of 3 units, alpha, beta and gamma.

The protein localises to the cell membrane. In terms of biological role, guanine nucleotide-binding proteins (G proteins) are involved as a modulator or transducer in various transmembrane signaling systems. The beta and gamma chains are required for the GTPase activity, for replacement of GDP by GTP, and for G protein-effector interaction. The sequence is that of Guanine nucleotide-binding protein G(I)/G(S)/G(O) subunit gamma-13 (GNG13) from Homo sapiens (Human).